Here is a 592-residue protein sequence, read N- to C-terminus: 2-succinyl-5-enolpyruvyl-6-hydroxy-3-cyclohexene-1-carboxylate synthase (592 aa).

The protein belongs to the TPP enzyme family. MenD subfamily. As to quaternary structure, homodimer. It depends on Mg(2+) as a cofactor. Requires Mn(2+) as cofactor. Thiamine diphosphate serves as cofactor.

The catalysed reaction is isochorismate + 2-oxoglutarate + H(+) = 5-enolpyruvoyl-6-hydroxy-2-succinyl-cyclohex-3-ene-1-carboxylate + CO2. It participates in quinol/quinone metabolism; 1,4-dihydroxy-2-naphthoate biosynthesis; 1,4-dihydroxy-2-naphthoate from chorismate: step 2/7. The protein operates within quinol/quinone metabolism; menaquinone biosynthesis. Its function is as follows. Catalyzes the thiamine diphosphate-dependent decarboxylation of 2-oxoglutarate and the subsequent addition of the resulting succinic semialdehyde-thiamine pyrophosphate anion to isochorismate to yield 2-succinyl-5-enolpyruvyl-6-hydroxy-3-cyclohexene-1-carboxylate (SEPHCHC). The polypeptide is 2-succinyl-5-enolpyruvyl-6-hydroxy-3-cyclohexene-1-carboxylate synthase (Leifsonia xyli subsp. xyli (strain CTCB07)).